The chain runs to 604 residues: Cell division cycle protein CDT1 (604 aa).

This sequence belongs to the Cdt1 family. In terms of assembly, associates with the MCM2-7 complex. Interacts with MCM2, ORC1, ORC2 and ORC6.

The protein localises to the cytoplasm. The protein resides in the nucleus. Functionally, DNA replication licensing factor, required for pre-replication complex assembly. Faithful duplication of the genetic material requires 'once per cell cycle' DNA replication initiation and elongation. Central to this control is the tightly regulated formation of prereplicative complexes (preRCs) at future origins of DNA replication. Required for the recruitment of the MCM2-7 helicase complex to the replication origins. The protein is Cell division cycle protein CDT1 (TAH11) of Saccharomyces cerevisiae (strain ATCC 204508 / S288c) (Baker's yeast).